A 252-amino-acid polypeptide reads, in one-letter code: Uracil-DNA glycosylase (252 aa).

Catalysis depends on Asp87, which acts as the Proton acceptor.

It belongs to the uracil-DNA glycosylase (UDG) superfamily. UNG family.

The protein localises to the host nucleus. The enzyme catalyses Hydrolyzes single-stranded DNA or mismatched double-stranded DNA and polynucleotides, releasing free uracil.. Functionally, excises uracil residues from the DNA which can arise as a result of misincorporation of dUMP residues by DNA polymerase or deamination of cytosines. Therefore may reduce deleterious uracil incorporation into the viral genome, particularly in terminally differentiated cells which lack DNA repair enzymes. This is Uracil-DNA glycosylase (46) from Alcelaphine herpesvirus 1 (strain C500) (AlHV-1).